Consider the following 727-residue polypeptide: 5'-AMP-activated serine/threonine-protein kinase catalytic subunit alpha (727 aa).

Residues 31–284 (YRLDKTLGIG…IHEIRNHPWF (254 aa)) form the Protein kinase domain. ATP-binding positions include 37 to 45 (LGIGSFGKV) and Lys-60. Asp-154 functions as the Proton acceptor in the catalytic mechanism. Residue Thr-188 is modified to Phosphothreonine. Residues 382 to 590 (FTTTTGFNPS…GSNNNSYEGG (209 aa)) are disordered. 2 stretches are compositionally biased toward low complexity: residues 391–483 (SNSN…SSIS) and 494–586 (NLNN…NNNS). The region spanning 679-727 (RMVNGKPIKLVLQLFRVAENRYLLDIKKIEGEIFIFFDICSLMLEELNL) is the KA1 domain.

Belongs to the protein kinase superfamily. CAMK Ser/Thr protein kinase family. SNF1 subfamily. In terms of assembly, heterotrimer of an alpha catalytic subunit, a beta and a gamma non-catalytic subunits.

It carries out the reaction L-seryl-[protein] + ATP = O-phospho-L-seryl-[protein] + ADP + H(+). The enzyme catalyses L-threonyl-[protein] + ATP = O-phospho-L-threonyl-[protein] + ADP + H(+). Its function is as follows. Activated enzyme phosphorylates target proteins and initiates downstream signaling pathways that shift metabolism from anabolic to catabolic pathways. Acts as a highly sensitive cellular energy sensor. The protein is 5'-AMP-activated serine/threonine-protein kinase catalytic subunit alpha (snfA) of Dictyostelium discoideum (Social amoeba).